Consider the following 622-residue polypeptide: Glucose 1,6-bisphosphate synthase (622 aa).

Residues Arg-73 and Ser-175 each coordinate alpha-D-glucose 1,6-bisphosphate. Residue Ser-175 is the Phosphoserine intermediate of the active site. 3 residues coordinate Mg(2+): Ser-175, Asp-332, and Asp-334. Ser-175 is subject to Phosphoserine. Alpha-D-glucose 1,6-bisphosphate contacts are provided by Asp-336, Arg-337, Glu-434, Ser-436, and Lys-448.

The protein belongs to the phosphohexose mutase family.

The protein localises to the cytoplasm. It localises to the cytosol. The enzyme catalyses (2R)-3-phospho-glyceroyl phosphate + alpha-D-glucose 1-phosphate = alpha-D-glucose 1,6-bisphosphate + (2R)-3-phosphoglycerate + H(+). The catalysed reaction is alpha-D-glucose 6-phosphate + (2R)-3-phospho-glyceroyl phosphate = alpha-D-glucose 1,6-bisphosphate + (2R)-3-phosphoglycerate + H(+). It catalyses the reaction (2R)-3-phospho-glyceroyl phosphate + alpha-D-ribose 1-phosphate = alpha-D-ribose 1,5-bisphosphate + (2R)-3-phosphoglycerate + H(+). It carries out the reaction 2-deoxy-alpha-D-ribose 1-phosphate + (2R)-3-phospho-glyceroyl phosphate = 2-deoxy-alpha-D-ribose 1,5-bisphosphate + (2R)-3-phosphoglycerate + H(+). The enzyme catalyses (2R)-3-phospho-glyceroyl phosphate + alpha-D-mannose 1-phosphate = alpha-D-mannose 1,6-bisphosphate + (2R)-3-phosphoglycerate + H(+). In terms of biological role, glucose 1,6-bisphosphate synthase using 1,3-bisphosphoglycerate as a phosphate donor and a series of 1-phosphate sugars, including glucose 1-phosphate, mannose 1-phosphate, ribose 1-phosphate and deoxyribose 1-phosphate, as acceptors. In vitro, also exhibits very low phosphopentomutase and phosphoglucomutase activity which are most probably not physiologically relevant. This is Glucose 1,6-bisphosphate synthase from Homo sapiens (Human).